Consider the following 321-residue polypeptide: Sideroflexin-3 (321 aa).

Methionine 1 carries the N-acetylmethionine modification. Transmembrane regions (helical) follow at residues 146–164 (LGTA…ALGL), 174–194 (LVGR…NIPL), 226–246 (FQVV…PPLI), and 266–286 (LQVG…CALF).

This sequence belongs to the sideroflexin family.

Its subcellular location is the mitochondrion membrane. It catalyses the reaction L-serine(in) = L-serine(out). Functionally, mitochondrial serine transporter that mediates transport of serine into mitochondria, an important step of the one-carbon metabolism pathway. Mitochondrial serine is converted to glycine and formate, which then exits to the cytosol where it is used to generate the charged folates that serve as one-carbon donors. The sequence is that of Sideroflexin-3 from Homo sapiens (Human).